The sequence spans 1813 residues: Sucrase-isomaltase, intestinal (1813 aa).

Over 1-12 (MARKKSSGLKIT) the chain is Cytoplasmic. The residue at position 7 (serine 7) is a Phosphoserine; by PKA. Residues 13–32 (LIVLLAIVTIIAIALVAILP) traverse the membrane as a helical; Signal-anchor for type II membrane protein segment. The Lumenal segment spans residues 33–1813 (TKTPAVELVS…LDEPIEISWT (1781 aa)). Residues 46-95 (GKCPSAENDRLDEKINCIPDQFPTQALCAMQGCCWNPRNESPTPWCSFAN) form the P-type 1 domain. 3 cysteine pairs are disulfide-bonded: cysteine 48/cysteine 79, cysteine 62/cysteine 78, and cysteine 73/cysteine 91. The interval 95–991 (NNHGYEFEKI…DLELNTATAR (897 aa)) is isomaltase. The N-linked (GlcNAc...) asparagine glycan is linked to asparagine 127. Residues aspartate 250 and aspartate 374 each contribute to the substrate site. Tyrosine 377 carries the sulfotyrosine modification. A glycan (N-linked (GlcNAc...) asparagine) is linked at asparagine 388. Residue aspartate 491 is the Nucleophile; for isomaltase activity of the active site. Cysteines 506 and 531 form a disulfide. Arginine 574 is a substrate binding site. Aspartate 590 (for isomaltase activity) is an active-site residue. Cysteine 621 and cysteine 632 are disulfide-bonded. Residue histidine 648 participates in substrate binding. N-linked (GlcNAc...) asparagine glycosylation is found at asparagine 669, asparagine 791, asparagine 896, and asparagine 911. A P-type 2 domain is found at 917–962 (NQVSLDSEKIDCFPDNNPENKQNCEERGCLWEPNSAAEGPRCYFPK). The tract at residues 992-1813 (IKMPSNPISV…LDEPIEISWT (822 aa)) is sucrase. Residues asparagine 1221 and asparagine 1289 are each glycosylated (N-linked (GlcNAc...) asparagine). Tyrosine 1294 is subject to Sulfotyrosine. 2 N-linked (GlcNAc...) asparagine glycosylation sites follow: asparagine 1326 and asparagine 1340. A sulfotyrosine mark is found at tyrosine 1368 and tyrosine 1371. The Nucleophile; for sucrase activity role is filled by aspartate 1380. Glutamate 1383 functions as the For sucrase activity in the catalytic mechanism. Residue asparagine 1432 is glycosylated (N-linked (GlcNAc...) asparagine). Aspartate 1486 (proton donor; for sucrase activity) is an active-site residue. Asparagine 1521, asparagine 1545, asparagine 1558, asparagine 1703, and asparagine 1772 each carry an N-linked (GlcNAc...) asparagine glycan.

Belongs to the glycosyl hydrolase 31 family. As to quaternary structure, the resulting sucrase and isomaltase subunits stay associated with one another in a complex by non-covalent linkages. In terms of processing, the precursor is proteolytically cleaved when exposed to pancreatic proteases in the intestinal lumen. Post-translationally, sulfated.

It localises to the apical cell membrane. It carries out the reaction Hydrolysis of sucrose and maltose by an alpha-D-glucosidase-type action.. It catalyses the reaction Hydrolysis of (1-&gt;6)-alpha-D-glucosidic linkages in some oligosaccharides produced from starch and glycogen by alpha-amylase, and in isomaltose.. Its function is as follows. Plays an important role in the final stage of carbohydrate digestion. Isomaltase activity is specific for both alpha-1,4- and alpha-1,6-oligosaccharides. This Suncus murinus (Asian house shrew) protein is Sucrase-isomaltase, intestinal (SI).